A 1193-amino-acid polypeptide reads, in one-letter code: Protein diaphanous homolog 3 (1193 aa).

A compositionally biased stretch (basic residues) spans 1–10 (MERHQPRLHH). A disordered region spans residues 1-57 (MERHQPRLHHPAQGSAAGTPYPSSASLRGCRESKMPRRKGPQHPPPPSGPEEPGEKR). The residue at position 26 (serine 26) is a Phosphoserine. The Nuclear localization signal signature appears at 36 to 60 (PRRKGPQHPPPPSGPEEPGEKRPKF). At threonine 68 the chain carries Phosphothreonine. Residues serine 77 and serine 175 each carry the phosphoserine modification. Residues 114-476 (PKPLSENELL…QIVLHRDGMD (363 aa)) form the GBD/FH3 domain. The stretch at 497 to 554 (IDQAKLEEFEEKASELYKKFEKEFTDHQETQAELQKKEAKINELQAELQAFKSQFGAL) forms a coiled coil. The tract at residues 558–622 (CNIPLPPSKE…PPPLGFLGGQ (65 aa)) is disordered. The region spanning 561 to 631 (PLPPSKEGGT…QNSPPLPILP (71 aa)) is the FH1 domain. The segment covering 575–600 (LPPPPPLPSGGGVPPPPPPPPPPPLP) has biased composition (pro residues). Phosphoserine is present on serine 624. Residues 636 to 1034 (PKKEFKPEIS…EKRVRIAKEL (399 aa)) enclose the FH2 domain. Residues 1013–1056 (KENIKKREAEEKEKRVRIAKELAERERLERQQKKKRLLEMKTEG) adopt a coiled-coil conformation. In terms of domain architecture, DAD spans 1057–1087 (DETGVMDNLLEALQSGAAFRDRRKRTPMPKD). A phosphoserine mark is found at serine 1093 and serine 1179. The short motif at 1184 to 1193 (EALLARLRAL) is the Nuclear export signal element.

It belongs to the formin homology family. Diaphanous subfamily. Post-translationally, ubiquitinated.

The protein resides in the cytoplasm. The protein localises to the nucleus. Its function is as follows. Actin nucleation and elongation factor required for the assembly of F-actin structures, such as actin cables and stress fibers. Required for cytokinesis, stress fiber formation and transcriptional activation of the serum response factor. Binds to GTP-bound form of Rho and to profilin: acts in a Rho-dependent manner to recruit profilin to the membrane, where it promotes actin polymerization. DFR proteins couple Rho and Src tyrosine kinase during signaling and the regulation of actin dynamics. Also acts as an actin nucleation and elongation factor in the nucleus by promoting nuclear actin polymerization inside the nucleus to drive serum-dependent SRF-MRTFA activity. In Homo sapiens (Human), this protein is Protein diaphanous homolog 3 (DIAPH3).